Reading from the N-terminus, the 506-residue chain is MKKAEMGRFNISPDEDSSSYSSNSDFNYSYPTKQAALKSHYADVDPENQNFLLESNLGKKKYETEFHPGTTSFGMSVFNLSNAIVGSGILGLSYAMANTGIALFIILLTFVSIFSLYSVHLLLKTANEGGSLLYEQLGYKAFGLVGKLAASGSITMQNIGAMSSYLFIVKYELPLVIQALTNIEDKTGLWYLNGNYLVLLVSLVVILPLSLFRNLGYLGYTSGLSLLCMVFFLIVVICKKFQVPCPVEAALIINETINTTLTQPTALVPALSHNVTENDSCRPHYFIFNSQTVYAVPILIFSFVCHPAVLPIYEELKDRSRRRMMNVSKISFFAMFLMYLLAALFGYLTFYEHVESELLHTYSSILGTDILLLIVRLAVLMAVTLTVPVVIFPIRSSVTHLLCASKDFSWWRHSLITVSILAFTNLLVIFVPTIRDIFGFIGASAASMLIFILPSAFYIKLVKKEPMKSVQKIGALFFLLSGVLVMTGSMALIVLDWVHNAPGGGH.

The segment at 1–23 (MKKAEMGRFNISPDEDSSSYSSN) is disordered. Residues 1-76 (MKKAEMGRFN…HPGTTSFGMS (76 aa)) are Cytoplasmic-facing. Positions 1 to 96 (MKKAEMGRFN…SGILGLSYAM (96 aa)) are regulates protein turnover upon amino acid deprivation. Phosphoserine occurs at positions 12, 21, 22, and 55. Residues 77-96 (VFNLSNAIVGSGILGLSYAM) traverse the membrane as a helical segment. A Na(+)-binding site is contributed by Asn-82. Topologically, residues 97 to 102 (ANTGIA) are extracellular. A helical transmembrane segment spans residues 103 to 123 (LFIILLTFVSIFSLYSVHLLL). Over 124 to 158 (KTANEGGSLLYEQLGYKAFGLVGKLAASGSITMQN) the chain is Cytoplasmic. Residues 159–177 (IGAMSSYLFIVKYELPLVI) traverse the membrane as a helical segment. Residues 178–188 (QALTNIEDKTG) lie on the Extracellular side of the membrane. Residues 189–209 (LWYLNGNYLVLLVSLVVILPL) form a helical membrane-spanning segment. Topologically, residues 210-217 (SLFRNLGY) are cytoplasmic. Residues 218 to 238 (LGYTSGLSLLCMVFFLIVVIC) form a helical membrane-spanning segment. Over 239-292 (KKFQVPCPVEAALIINETINTTLTQPTALVPALSHNVTENDSCRPHYFIFNSQT) the chain is Extracellular. Cys-245 and Cys-281 are disulfide-bonded. Asn-258 and Asn-274 each carry an N-linked (GlcNAc...) asparagine glycan. Residues 293-313 (VYAVPILIFSFVCHPAVLPIY) traverse the membrane as a helical segment. The Cytoplasmic segment spans residues 314–329 (EELKDRSRRRMMNVSK). The chain crosses the membrane as a helical span at residues 330–350 (ISFFAMFLMYLLAALFGYLTF). The Extracellular portion of the chain corresponds to 351 to 371 (YEHVESELLHTYSSILGTDIL). A helical transmembrane segment spans residues 372–392 (LLIVRLAVLMAVTLTVPVVIF). Thr-386 is a binding site for Na(+). The Cytoplasmic segment spans residues 393–413 (PIRSSVTHLLCASKDFSWWRH). Residues 414 to 434 (SLITVSILAFTNLLVIFVPTI) form a helical membrane-spanning segment. At 435-436 (RD) the chain is on the extracellular side. A helical membrane pass occupies residues 437-457 (IFGFIGASAASMLIFILPSAF). Residues 458-472 (YIKLVKKEPMKSVQK) lie on the Cytoplasmic side of the membrane. The helical transmembrane segment at 473 to 495 (IGALFFLLSGVLVMTGSMALIVL) threads the bilayer. Residues 496 to 506 (DWVHNAPGGGH) are Extracellular-facing.

The protein belongs to the amino acid/polyamine transporter 2 family. Post-translationally, polyubiquitination by NEDD4L regulates the degradation and the activity of SLC38A2.

The protein localises to the cell membrane. The catalysed reaction is L-alanine(in) + Na(+)(in) = L-alanine(out) + Na(+)(out). It carries out the reaction glycine(in) + Na(+)(in) = glycine(out) + Na(+)(out). The enzyme catalyses L-serine(in) + Na(+)(in) = L-serine(out) + Na(+)(out). It catalyses the reaction L-proline(in) + Na(+)(in) = L-proline(out) + Na(+)(out). The catalysed reaction is L-methionine(in) + Na(+)(in) = L-methionine(out) + Na(+)(out). It carries out the reaction L-histidine(in) + Na(+)(in) = L-histidine(out) + Na(+)(out). The enzyme catalyses L-asparagine(in) + Na(+)(in) = L-asparagine(out) + Na(+)(out). It catalyses the reaction L-glutamine(in) + Na(+)(in) = L-glutamine(out) + Na(+)(out). The catalysed reaction is L-threonine(in) + Na(+)(in) = L-threonine(out) + Na(+)(out). It carries out the reaction L-leucine(in) + Na(+)(in) = L-leucine(out) + Na(+)(out). The enzyme catalyses L-phenylalanine(in) + Na(+)(in) = L-phenylalanine(out) + Na(+)(out). Inhibited by N-methyl-D-glucamine. Inhibited by choline. Allosteric regulation of sodium ions binding by pH. Its function is as follows. Symporter that cotransports neutral amino acids and sodium ions from the extracellular to the intracellular side of the cell membrane. The transport is pH-sensitive, Li(+)-intolerant, electrogenic, driven by the Na(+) electrochemical gradient and cotransports of neutral amino acids and sodium ions with a stoichiometry of 1:1. May function in the transport of amino acids at the blood-brain barrier. May function in the transport of amino acids in the supply of maternal nutrients to the fetus through the placenta. Maintains a key metabolic glutamine/glutamate balance underpinning retrograde signaling by dendritic release of the neurotransmitter glutamate. Transports L-proline in differentiating osteoblasts for the efficient synthesis of proline-enriched proteins and provides proline essential for osteoblast differentiation and bone formation during bone development. This chain is Sodium-coupled neutral amino acid symporter 2, found in Pan paniscus (Pygmy chimpanzee).